Consider the following 194-residue polypeptide: MRQSSQVRETKETKIKLNLQLDESTNVSIQTGVGFFDHMLTLFARHGRFGLQVEAEGDVFVDAHHTVEDVGIVLGNCLKEALQNKEGINRYGSAYVPMDESLGFVAIDISGRSYCVFQGELTNPKLGDFDTELTEEFFRAVAHAANITLHARVLYGSNTHHKIEALFKAFGRALREAVEKNANITGVNSTKGML.

It belongs to the imidazoleglycerol-phosphate dehydratase family.

The protein resides in the cytoplasm. The catalysed reaction is D-erythro-1-(imidazol-4-yl)glycerol 3-phosphate = 3-(imidazol-4-yl)-2-oxopropyl phosphate + H2O. The protein operates within amino-acid biosynthesis; L-histidine biosynthesis; L-histidine from 5-phospho-alpha-D-ribose 1-diphosphate: step 6/9. The sequence is that of Imidazoleglycerol-phosphate dehydratase from Bacillus cereus (strain B4264).